Here is a 147-residue protein sequence, read N- to C-terminus: D-aminoacyl-tRNA deacylase (147 aa).

The short motif at 137-138 (GP) is the Gly-cisPro motif, important for rejection of L-amino acids element.

It belongs to the DTD family. Homodimer.

The protein localises to the cytoplasm. The catalysed reaction is glycyl-tRNA(Ala) + H2O = tRNA(Ala) + glycine + H(+). It carries out the reaction a D-aminoacyl-tRNA + H2O = a tRNA + a D-alpha-amino acid + H(+). In terms of biological role, an aminoacyl-tRNA editing enzyme that deacylates mischarged D-aminoacyl-tRNAs. Also deacylates mischarged glycyl-tRNA(Ala), protecting cells against glycine mischarging by AlaRS. Acts via tRNA-based rather than protein-based catalysis; rejects L-amino acids rather than detecting D-amino acids in the active site. By recycling D-aminoacyl-tRNA to D-amino acids and free tRNA molecules, this enzyme counteracts the toxicity associated with the formation of D-aminoacyl-tRNA entities in vivo and helps enforce protein L-homochirality. In Acinetobacter baumannii (strain ACICU), this protein is D-aminoacyl-tRNA deacylase.